Consider the following 445-residue polypeptide: Alkylglycerol monooxygenase (445 aa).

The next 2 helical transmembrane spans lie at 43-63 and 111-131; these read ATPF…ILKG and WDSP…YYWF. The 130-residue stretch at 120–249 folds into the Fatty acid hydroxylase domain; the sequence is AFLGVDFGYY…LIIWDKIFGT (130 aa). The Histidine box-1 signature appears at 132-136; that stretch reads HRMAH. Positions 145-149 match the Histidine box-2 motif; that stretch reads HQTHH. Residues 221–225 carry the Histidine box-3 motif; sequence HRVHH. 3 helical membrane passes run 334–354, 363–383, and 413–433; these read LLKI…EETF, VTLL…GFLL, and VPSL…FWGV.

The protein belongs to the sterol desaturase family. TMEM195 subfamily. Fe cation serves as cofactor.

The protein resides in the endoplasmic reticulum membrane. The catalysed reaction is 1-O-(1,2-saturated-alkyl)-sn-glycerol + (6R)-L-erythro-5,6,7,8-tetrahydrobiopterin + O2 = a 1-(1-hydroxyalkyl)-sn-glycerol + (6R)-L-erythro-6,7-dihydrobiopterin + H2O. Functionally, glyceryl-ether monooxygenase that cleaves the O-alkyl bond of ether lipids. Ether lipids are essential components of brain membranes. This Homo sapiens (Human) protein is Alkylglycerol monooxygenase (AGMO).